The sequence spans 148 residues: uncharacterized protein (148 aa).

Belongs to the serpin family. Poxviruses subfamily.

This is an uncharacterized protein from Fowlpox virus (strain NVSL) (FPV).